Consider the following 217-residue polypeptide: tRNA (guanine-N(7)-)-methyltransferase (217 aa).

Residues E46, E71, D98, and D120 each coordinate S-adenosyl-L-methionine. D120 is a catalytic residue. A substrate-binding site is contributed by K124. An interaction with RNA region spans residues 126 to 131; sequence RHEKRR. Substrate is bound by residues D156 and 196–199; that span reads TEYE.

This sequence belongs to the class I-like SAM-binding methyltransferase superfamily. TrmB family.

It carries out the reaction guanosine(46) in tRNA + S-adenosyl-L-methionine = N(7)-methylguanosine(46) in tRNA + S-adenosyl-L-homocysteine. The protein operates within tRNA modification; N(7)-methylguanine-tRNA biosynthesis. Its function is as follows. Catalyzes the formation of N(7)-methylguanine at position 46 (m7G46) in tRNA. The chain is tRNA (guanine-N(7)-)-methyltransferase from Lactobacillus gasseri (strain ATCC 33323 / DSM 20243 / BCRC 14619 / CIP 102991 / JCM 1131 / KCTC 3163 / NCIMB 11718 / NCTC 13722 / AM63).